Reading from the N-terminus, the 486-residue chain is E3 ubiquitin-protein ligase TRIM50 (486 aa).

An RING-type zinc finger spans residues 16 to 57 (CPVCLEVFKEPLMLQCGHSYCKGCLLSLSRHLDSELRCPVCR). A B box-type zinc finger spans residues 84–125 (PEPQVCTHHRNPLSLFCEKDQELICGLCGLLGSHQHHRVTPV). Positions 89, 92, 111, and 117 each coordinate Zn(2+). Coiled-coil stretches lie at residues 125-170 (VSTV…ESDV) and 204-235 (LVAS…FGNE). A B30.2/SPRY domain is found at 275 to 474 (DIKLTVWKRL…LPMVLPLPSG (200 aa)). Lys-372 is modified (N6-acetyllysine).

This sequence belongs to the TRIM/RBCC family. As to quaternary structure, can form dimers and trimers. Interacts with several E2 ubiquitin-conjugating enzymes, including UBE2L6, UBE2E1, UBE2E3. No interaction with UBE2H. Interacts with BECN1. Interacts with SQSTM1. Interacts with NLRP3. Auto-ubiquitinated. Post-translationally, acetylated by EP300 and KAT2B. HDAC6 drives TRIM50 deacetylation. Acetylation antagonizes with TRIM50 ubiquitination.

The protein localises to the cytoplasm. It carries out the reaction S-ubiquitinyl-[E2 ubiquitin-conjugating enzyme]-L-cysteine + [acceptor protein]-L-lysine = [E2 ubiquitin-conjugating enzyme]-L-cysteine + N(6)-ubiquitinyl-[acceptor protein]-L-lysine.. Functionally, E3 ubiquitin-protein ligase that ubiquitinates Beclin-1/BECN1 in a 'Lys-63'-dependent manner enhancing its binding to ULK1. In turn, promotes starvation-induced autophagy activation. Also interacts with p62/SQSTM1 protein and thereby induces the formation and the autophagy clearance of aggresome-associated polyubiquitinated proteins through HDAC6 interaction. Also promotes NLRP3 inflammasome activation by directly inducing NLRP3 oligomerization independent of its E3 ligase function. The chain is E3 ubiquitin-protein ligase TRIM50 (TRIM50) from Sus scrofa (Pig).